Consider the following 75-residue polypeptide: UPF0235 protein Mflv_3569 (75 aa).

It belongs to the UPF0235 family.

In Mycolicibacterium gilvum (strain PYR-GCK) (Mycobacterium gilvum (strain PYR-GCK)), this protein is UPF0235 protein Mflv_3569.